The sequence spans 55 residues: Protein CADMIUM TOLERANCE 2 (55 aa).

The chain crosses the membrane as a helical span at residues 24-40 (GCLYACIFTALCCFCCY).

The protein belongs to the CYSTM1 family. Expressed only in roots.

It is found in the cell membrane. Its subcellular location is the secreted. The protein resides in the cell wall. Confers resistance to heavy metal ions (e.g. cadmium (CdCl(2)) and copper (CuCl(2))) by chelating them at the plasma membrane of root cells, thus stopping their entry and reducing their accumulation. The sequence is that of Protein CADMIUM TOLERANCE 2 from Oryza sativa subsp. japonica (Rice).